Reading from the N-terminus, the 492-residue chain is MRKNPLVLGVSASVETNVGRIAQIIGPVLDVSFPPGNMPNIYNSLIVKGQGTAGQEIQVTCEVQQLLGNHKVRAVAMSATDGLTRGMRVIDTGAPLSVPVGGATLGRIFNVLGEPVDNLGPVDAGITSPIHRPAPAFTELDTKLSIFETGIKVVDLLAPYRRGGKIGLFGGAGVGKTVLIMELINNIAKAHGGVSVFGGVGERTREGNDLYMEMKESGVIDEQKISESKVALVYGQMNEPPGARMRVGLTALTMAEYFRDVNEQDVLLFIDNIFRFVQAGSEVSALLGRMPSAVGYQPTLSTEMGSLQERITSTKKGSITSIQAVYVPADDLTDPAPATTFAHSDATTVLSRGLAAKGIYPAVDPLDSTSTMLQPWIVGEEHYETAQGVKQTLQRYKELQDIIAIPGLDELSEEDRLIVARARKIERFLSQPFFVAEVFTGSPGKYVGLMETIRGFQMILSGELDGLIEQSFYLVGNIDEATAKAINSSMES.

Residue 170–177 participates in ATP binding; sequence GGAGVGKT.

This sequence belongs to the ATPase alpha/beta chains family. In terms of assembly, F-type ATPases have 2 components, CF(1) - the catalytic core - and CF(0) - the membrane proton channel. CF(1) has five subunits: alpha(3), beta(3), gamma(1), delta(1), epsilon(1). CF(0) has four main subunits: a(1), b(1), b'(1) and c(9-12).

Its subcellular location is the plastid. The protein resides in the chloroplast thylakoid membrane. It catalyses the reaction ATP + H2O + 4 H(+)(in) = ADP + phosphate + 5 H(+)(out). Its function is as follows. Produces ATP from ADP in the presence of a proton gradient across the membrane. The catalytic sites are hosted primarily by the beta subunits. This is ATP synthase subunit beta, chloroplastic from Pinus thunbergii (Japanese black pine).